The sequence spans 166 residues: Urease accessory protein UreE (166 aa).

It belongs to the UreE family.

The protein localises to the cytoplasm. In terms of biological role, involved in urease metallocenter assembly. Binds nickel. Probably functions as a nickel donor during metallocenter assembly. This chain is Urease accessory protein UreE, found in Pseudomonas savastanoi pv. phaseolicola (strain 1448A / Race 6) (Pseudomonas syringae pv. phaseolicola (strain 1448A / Race 6)).